The primary structure comprises 298 residues: Ribosomal RNA small subunit methyltransferase H (298 aa).

S-adenosyl-L-methionine-binding positions include 35–37 (GGH), D55, F82, D100, and Q107.

It belongs to the methyltransferase superfamily. RsmH family.

The protein resides in the cytoplasm. The enzyme catalyses cytidine(1402) in 16S rRNA + S-adenosyl-L-methionine = N(4)-methylcytidine(1402) in 16S rRNA + S-adenosyl-L-homocysteine + H(+). Its function is as follows. Specifically methylates the N4 position of cytidine in position 1402 (C1402) of 16S rRNA. The sequence is that of Ribosomal RNA small subunit methyltransferase H from Chlamydia felis (strain Fe/C-56) (Chlamydophila felis).